The sequence spans 392 residues: Formate-dependent phosphoribosylglycinamide formyltransferase (392 aa).

Residues E22–L23 and E82 each bind N(1)-(5-phospho-beta-D-ribosyl)glycinamide. ATP is bound by residues R114, K155, S160–Q165, E195–V198, and E203. The region spanning R119–L308 is the ATP-grasp domain. Residues E267 and E279 each coordinate Mg(2+). Residues D286, K355, and R362–R363 each bind N(1)-(5-phospho-beta-D-ribosyl)glycinamide.

Belongs to the PurK/PurT family. Homodimer.

It carries out the reaction N(1)-(5-phospho-beta-D-ribosyl)glycinamide + formate + ATP = N(2)-formyl-N(1)-(5-phospho-beta-D-ribosyl)glycinamide + ADP + phosphate + H(+). It functions in the pathway purine metabolism; IMP biosynthesis via de novo pathway; N(2)-formyl-N(1)-(5-phospho-D-ribosyl)glycinamide from N(1)-(5-phospho-D-ribosyl)glycinamide (formate route): step 1/1. Involved in the de novo purine biosynthesis. Catalyzes the transfer of formate to 5-phospho-ribosyl-glycinamide (GAR), producing 5-phospho-ribosyl-N-formylglycinamide (FGAR). Formate is provided by PurU via hydrolysis of 10-formyl-tetrahydrofolate. The polypeptide is Formate-dependent phosphoribosylglycinamide formyltransferase (Salmonella schwarzengrund (strain CVM19633)).